A 670-amino-acid chain; its full sequence is uncharacterized protein (670 aa).

Positions 53 to 83 (PTAKPSDFPGDAVTGTQPVPREPSSLPRTTP) are disordered. Repeat copies occupy residues 143–158 (ATPA…TTAT), 171–186 (ATPA…TTAT), 200–214 (ATPA…TTTP), 215–233 (ATPA…TTTP), 234–252 (AMPA…TTTP), 253–268 (AMPA…TTAT), 279–293 (TMPA…TTTP), 294–309 (AMPT…TTAT), 320–334 (TMPA…TTTP), 335–349 (AMPA…VTKP), 362–376 (AMPT…TTTP), 377–391 (AMPT…TTTP), 392–406 (AMPT…TTTP), 407–421 (AKPA…TTTP), 422–436 (AMPA…TTAP), 437–452 (ATPA…TKPT), 464–477 (VKPT…TTTT), 478–493 (AKPT…TKPT), 504–517 (AKPT…TVAT), 518–531 (AKPT…TTTT), 532–545 (AKPT…TTTT), 546–559 (AKPT…TTTT), 560–573 (AKPT…TTTT), 574–587 (AKPA…TTTT), 588–601 (AKPA…TTTT), 602–615 (AKPA…TTTT), and 616–629 (AKPA…TTTT). Positions 187 to 225 (PAGANDTAVTTTSATPAGANDTAVTTTPATPAGANDTAN) are disordered. Positions 205 to 225 (ANDTAVTTTPATPAGANDTAN) are enriched in low complexity. Residues 339-395 (GANDTANVTKPAGSTDTVVTTTPAMPTGATDTVVTTTPAMPTGATDTVVTTTPAMPT) form a disordered region. Positions 342–362 (DTANVTKPAGSTDTVVTTTPA) are enriched in polar residues. Over residues 363–395 (MPTGATDTVVTTTPAMPTGATDTVVTTTPAMPT) the composition is skewed to low complexity. Composition is skewed to low complexity over residues 471 to 482 (GTVTTTTAKPTG) and 490 to 503 (TKPT…TTTT). The tract at residues 471 to 503 (GTVTTTTAKPTGANDTANVTKPTGATGTVTTTT) is disordered. The segment covering 525–634 (GTVTTTTAKP…VTTTTAKPAG (110 aa)) has biased composition (low complexity). A disordered region spans residues 525–670 (GTVTTTTAKP…GHKPKSGARR (146 aa)). The segment covering 638-654 (GHGHGHGHGHGHGHGHG) has biased composition (basic residues).

This is an uncharacterized protein from Ictalurid herpesvirus 1 (strain Auburn) (IcHV-1).